A 488-amino-acid chain; its full sequence is GTPase Der (488 aa).

EngA-type G domains follow at residues 3-166 and 199-372; these read PVVA…AEAM and IKLA…DSAT. GTP-binding positions include 9-16, 56-60, 118-121, 205-212, 252-256, and 317-320; these read GRPNVGKS, DTGGI, NKID, GKPNVGKS, DTAGV, and NKWD. Residues 373-457 form the KH-like domain; that stretch reads RRVSTSMLTR…PIQLRFQEGD (85 aa).

It belongs to the TRAFAC class TrmE-Era-EngA-EngB-Septin-like GTPase superfamily. EngA (Der) GTPase family. Associates with the 50S ribosomal subunit.

GTPase that plays an essential role in the late steps of ribosome biogenesis. The protein is GTPase Der of Shewanella sp. (strain ANA-3).